The sequence spans 237 residues: N-demethylindolmycin N-methyltransferase (237 aa).

Belongs to the methyltransferase superfamily.

It catalyses the reaction N-demethylindolmycin + S-adenosyl-L-methionine = indolmycin + S-adenosyl-L-homocysteine + H(+). In terms of biological role, involved in the biosynthesis of the antibiotic indolmycin, an inhibitor of the bacterial tryptophan-tRNA synthetases. Catalyzes the methylation of N-demethylindolmycin to yield indolmycin, with S-adenosylmethionine (AdoMet) acting as the methyl donor. The chain is N-demethylindolmycin N-methyltransferase from Streptomyces griseus.